The sequence spans 215 residues: Probable transaldolase (215 aa).

The active-site Schiff-base intermediate with substrate is K83.

It belongs to the transaldolase family. Type 3B subfamily.

Its subcellular location is the cytoplasm. It catalyses the reaction D-sedoheptulose 7-phosphate + D-glyceraldehyde 3-phosphate = D-erythrose 4-phosphate + beta-D-fructose 6-phosphate. It functions in the pathway carbohydrate degradation; pentose phosphate pathway; D-glyceraldehyde 3-phosphate and beta-D-fructose 6-phosphate from D-ribose 5-phosphate and D-xylulose 5-phosphate (non-oxidative stage): step 2/3. Transaldolase is important for the balance of metabolites in the pentose-phosphate pathway. The polypeptide is Probable transaldolase (Methanococcus maripaludis (strain C7 / ATCC BAA-1331)).